The chain runs to 101 residues: Apolipoprotein C-II (101 aa).

An N-terminal signal peptide occupies residues 1–22 (MGARHLLALLLVLLVLGFEVQG). The lipid binding stretch occupies residues 66-74 (TMDEKIRDM). Residues 78 to 101 (STAAVSTYVGIFTDQLLSLLKGDE) are lipoprotein lipase cofactor.

Belongs to the apolipoprotein C2 family. Proapolipoprotein C-II is synthesized as a sialic acid containing glycoprotein which is subsequently desialylated prior to its proteolytic processing. In terms of processing, proapolipoprotein C-II, the major form found in plasma undergoes proteolytic cleavage of its N-terminal hexapeptide to generate apolipoprotein C-II, which occurs as the minor form in plasma.

The protein localises to the secreted. Functionally, component of chylomicrons, very low-density lipoproteins (VLDL), low-density lipoproteins (LDL), and high-density lipoproteins (HDL) in plasma. Plays an important role in lipoprotein metabolism as an activator of lipoprotein lipase. Both proapolipoprotein C-II and apolipoprotein C-II can activate lipoprotein lipase. This is Apolipoprotein C-II (APOC2) from Tapirus indicus (Asiatic tapir).